A 77-amino-acid chain; its full sequence is Defensin-like protein 1 (77 aa).

A signal peptide spans 1-30 (MKLSVRFISAALLLFMVFIATGMGPVTVEA). 4 cysteine pairs are disulfide-bonded: Cys33–Cys77, Cys44–Cys64, Cys50–Cys71, and Cys54–Cys73.

Belongs to the DEFL family. In terms of tissue distribution, expressed in the whole plant except roots.

Its subcellular location is the secreted. Functionally, confers broad-spectrum resistance to pathogens. The polypeptide is Defensin-like protein 1 (PDF2.3) (Arabidopsis thaliana (Mouse-ear cress)).